We begin with the raw amino-acid sequence, 338 residues long: Dihydroorotate dehydrogenase (quinone) (338 aa).

FMN is bound by residues 59–63 and Thr83; that span reads AGLDK. Residue Lys63 coordinates substrate. Substrate is bound at residue 108–112; the sequence is NRMGF. FMN-binding residues include Asn136 and Asn169. Position 169 (Asn169) interacts with substrate. Ser172 acts as the Nucleophile in catalysis. Residue Asn174 coordinates substrate. FMN contacts are provided by Lys214 and Thr242. 243–244 is a substrate binding site; the sequence is NT. FMN contacts are provided by residues Gly265, Gly294, and 315–316; that span reads YS.

It belongs to the dihydroorotate dehydrogenase family. Type 2 subfamily. Monomer. Requires FMN as cofactor.

The protein resides in the cell membrane. It carries out the reaction (S)-dihydroorotate + a quinone = orotate + a quinol. The protein operates within pyrimidine metabolism; UMP biosynthesis via de novo pathway; orotate from (S)-dihydroorotate (quinone route): step 1/1. Functionally, catalyzes the conversion of dihydroorotate to orotate with quinone as electron acceptor. The polypeptide is Dihydroorotate dehydrogenase (quinone) (Azoarcus sp. (strain BH72)).